The following is a 294-amino-acid chain: Pyrroline-5-carboxylate reductase (294 aa).

This sequence belongs to the pyrroline-5-carboxylate reductase family.

It is found in the cytoplasm. It carries out the reaction L-proline + NADP(+) = (S)-1-pyrroline-5-carboxylate + NADPH + 2 H(+). The enzyme catalyses L-proline + NAD(+) = (S)-1-pyrroline-5-carboxylate + NADH + 2 H(+). It functions in the pathway amino-acid biosynthesis; L-proline biosynthesis; L-proline from L-glutamate 5-semialdehyde: step 1/1. In terms of biological role, catalyzes the reduction of 1-pyrroline-5-carboxylate (PCA) to L-proline. In Mycobacterium leprae (strain TN), this protein is Pyrroline-5-carboxylate reductase.